The following is a 288-amino-acid chain: MEKYHGLEKIGEGTYGVVYKAQNNYGETFALKKIRLEKEDEGIPSTAIREISILKELKHSNIVKLYDVIHTKKRLILVFEHLDQDLKKLLDVCDGGLESVTAKSFLLQLLSGIAYCHEHRVLHRDLKPQNLLINREGELKIADFGLARAFGIPVRKYTHEVVTLWYRAPDILMGSKKYSTPIDMWSVGCIFAEMVNGRPLFPGVSETDQLMRIFRILGTPNSENWPNVTELPKYDPDFMVYEPLPWETFLKGLDDTGIDLLSKMLRLDPNQRITAKQALEHAYFKESN.

In terms of domain architecture, Protein kinase spans 4-284; sequence YHGLEKIGEG…AKQALEHAYF (281 aa). Residues 10-18 and Lys32 each bind ATP; that span reads IGEGTYGVV. At Thr14 the chain carries Phosphothreonine. Tyr15 bears the Phosphotyrosine mark. Residue Asp125 is the Proton acceptor of the active site. Thr158 carries the phosphothreonine modification.

Belongs to the protein kinase superfamily. CMGC Ser/Thr protein kinase family. CDC2/CDKX subfamily. In terms of assembly, may form a complex composed of at least the catalytic subunit CRK2 and a cyclin. It depends on Mg(2+) as a cofactor.

Its subcellular location is the cytoplasm. It carries out the reaction L-seryl-[protein] + ATP = O-phospho-L-seryl-[protein] + ADP + H(+). The enzyme catalyses L-threonyl-[protein] + ATP = O-phospho-L-threonyl-[protein] + ADP + H(+). It catalyses the reaction [DNA-directed RNA polymerase] + ATP = phospho-[DNA-directed RNA polymerase] + ADP + H(+). Its activity is regulated as follows. Phosphorylation at Thr-14 or Tyr-15 inactivates the enzyme, while phosphorylation at Thr-158 activates it. Serine/threonine-protein kinase. Involved in the control of the cell cycle. Required for entry into S-phase and mitosis. Probable component of the kinase complex that phosphorylates the repetitive C-terminus of RNA polymerase II. In Plasmodium vivax, this protein is Cyclin-dependent kinase 2 homolog.